Reading from the N-terminus, the 974-residue chain is ATP-dependent RNA helicase glh-2 (974 aa).

Residues 212 to 435 form a disordered region; that stretch reads HESGFGGGKS…SGFGGGNDGG (224 aa). A compositionally biased stretch (gly residues) spans 215–250; that stretch reads GFGGGKSGGFGGGNSGGSGFGSGGNSNGFGSGGGGQ. Residues 256 to 267 are compositionally biased toward polar residues; it reads NNNCFNCQQPGH. CCHC-type zinc fingers lie at residues 257–274 and 282–299; these read NNCF…DCPE and RVCY…DCPE. 2 stretches are compositionally biased toward basic and acidic residues: residues 268–282 and 293–307; these read RSND…REPR and NSRD…REGR. Over residues 309–364 the composition is skewed to gly residues; sequence GFTGGSSGFGGGNGGGTGFDSGLTNGFGSGNNGESGFGSGGFGGNSNGFGSGGGGQ. Over residues 370 to 381 the composition is skewed to polar residues; sequence NNNCFNCQQPGH. 2 consecutive CCHC-type zinc fingers follow at residues 371–388 and 396–413; these read NNCF…DCPE and RVCY…DCPE. 2 stretches are compositionally biased toward basic and acidic residues: residues 382–396 and 407–421; these read RSND…REPR and NSRD…REGR. Over residues 426–435 the composition is skewed to gly residues; the sequence is SGFGGGNDGG. 2 consecutive CCHC-type zinc fingers follow at residues 453-470 and 473-490; these read MKCF…ECPE and RGCF…ECPN. The short motif at 552 to 580 is the Q motif element; the sequence is KTFSEANLGETMKKNVAHAGYTKTTPIQQ. The Helicase ATP-binding domain occupies 583 to 767; the sequence is LPLIHQGHDI…RNHLKEGYIM (185 aa). 596 to 603 is a binding site for ATP; that stretch reads AQTGSGKT. Residues 710–713 carry the DEAD box motif; sequence DEAD. One can recognise a Helicase C-terminal domain in the interval 803-950; that stretch reads DIDSYTTEKN…LVPEWMQGAS (148 aa).

This sequence belongs to the DEAD box helicase family. DDX4/VASA subfamily. Interacts (via C-terminus) with kgb-1.

It catalyses the reaction ATP + H2O = ADP + phosphate + H(+). In terms of biological role, probable ATP-binding RNA helicase. This Caenorhabditis elegans protein is ATP-dependent RNA helicase glh-2 (glh-2).